The chain runs to 63 residues: Potassium channel toxin MeuTXKalpha4 (63 aa).

An N-terminal signal peptide occupies residues 1-28 (MSRLLIFILTAVVLSVIIDILNNSKVEG). Cystine bridges form between cysteine 35-cysteine 53, cysteine 39-cysteine 59, and cysteine 43-cysteine 61.

Belongs to the short scorpion toxin superfamily. Potassium channel inhibitor family. As to expression, expressed by the venom gland.

It localises to the secreted. Functionally, may block voltage-gated potassium channels (Kv). The protein is Potassium channel toxin MeuTXKalpha4 of Mesobuthus eupeus (Lesser Asian scorpion).